We begin with the raw amino-acid sequence, 161 residues long: RNA pyrophosphohydrolase (161 aa).

The 144-residue stretch at glycine 6–lysine 149 folds into the Nudix hydrolase domain. Residues glycine 38–glycine 59 carry the Nudix box motif.

The protein belongs to the Nudix hydrolase family. RppH subfamily. Requires a divalent metal cation as cofactor.

Its function is as follows. Accelerates the degradation of transcripts by removing pyrophosphate from the 5'-end of triphosphorylated RNA, leading to a more labile monophosphorylated state that can stimulate subsequent ribonuclease cleavage. This chain is RNA pyrophosphohydrolase, found in Marinomonas sp. (strain MWYL1).